Consider the following 259-residue polypeptide: Global transcriptional regulator CodY (259 aa).

The interval 1–155 (MNLLEKTRKI…GATVVGMEIL (155 aa)) is GAF domain. The H-T-H motif DNA-binding region spans 203-222 (ASKIADRVGITRSVIVNALR). Serine 215 is modified (phosphoserine).

Belongs to the CodY family.

It localises to the cytoplasm. Its function is as follows. DNA-binding global transcriptional regulator which is involved in the adaptive response to starvation and acts by directly or indirectly controlling the expression of numerous genes in response to nutrient availability. During rapid exponential growth, CodY is highly active and represses genes whose products allow adaptation to nutrient depletion. The sequence is that of Global transcriptional regulator CodY from Geobacillus thermodenitrificans (strain NG80-2).